Reading from the N-terminus, the 1322-residue chain is Serine/threonine-protein kinase TIO (1322 aa).

The Protein kinase domain occupies 6 to 256 (YHVIELVGEG…WPALREHPFV (251 aa)). ATP-binding positions include 12-20 (VGEGSFGRV) and K35. Residue D127 is the Proton acceptor of the active site. The segment at 1000–1322 (CMEDRDLLKA…VIVAKVSGES (323 aa)) is required for the binding to Kinesin-12 members. 6 ARM repeats span residues 1056–1098 (PRLA…DLSR), 1101–1140 (KAFY…NMCR), 1143–1182 (GYFY…NAAY), 1183–1223 (HNDT…NLVR), 1226–1273 (NKLC…LFSL), and 1281–1320 (QICR…KVSG).

This sequence belongs to the protein kinase superfamily. Ser/Thr protein kinase family. In terms of assembly, interacts with Kinesin-12 members KIN12A/PAKRP1 and KIN12B/PAKRP1L. Interacts with KIN7B/NACK2. As to expression, ubiquitous.

The protein resides in the cytoplasm. It is found in the cytoskeleton. The protein localises to the phragmoplast. The enzyme catalyses L-seryl-[protein] + ATP = O-phospho-L-seryl-[protein] + ADP + H(+). The catalysed reaction is L-threonyl-[protein] + ATP = O-phospho-L-threonyl-[protein] + ADP + H(+). Functionally, plays a role in conventional modes of cytokinesis in meristems and during male gametogenesis but also acts in nonconventional modes of cytokinesis (cellularization) during female gametogenesis. Constitutes a signaling module in association with Kinesin-12 members that is required to support phragmoplast expansion and cell-plate growth in plant cells. The chain is Serine/threonine-protein kinase TIO (TIO) from Arabidopsis thaliana (Mouse-ear cress).